A 1852-amino-acid chain; its full sequence is Dihydropyridine-sensitive L-type skeletal muscle calcium channel subunit alpha-1 (1852 aa).

The Cytoplasmic portion of the chain corresponds to 1-70; the sequence is MESGSGGGGG…KTCINIVEWK (70 aa). The stretch at 57–354 is one I repeat; the sequence is NPFRKTCINI…LVLGALSGEF (298 aa). A helical transmembrane segment spans residues 71–86; sequence PFEIIILLTIFANCVA. The Extracellular segment spans residues 87-107; sequence LAVFLPMPEEDTNNTNLTLES. N99 and N102 each carry an N-linked (GlcNAc...) asparagine glycan. The helical transmembrane segment at 108–127 threads the bilayer; that stretch reads LEYIFLVIFTLECFLKIVAY. Topologically, residues 128–139 are cytoplasmic; sequence GLLFHEGAYLRN. Residues 140 to 155 form a helical membrane-spanning segment; the sequence is CWNILDFVIVFMGLFT. The Extracellular segment spans residues 156–176; that stretch reads LVVDTINTIAGVPTEKGGGFD. The helical transmembrane segment at 177 to 195 threads the bilayer; sequence MKALRAFRVLRPLRLVSGV. The Cytoplasmic portion of the chain corresponds to 196–214; it reads PSLQVVMSSILKSMLPLFH. The helical transmembrane segment at 215–234 threads the bilayer; the sequence is IALLVFFMVHIYAIMGLELF. Residues 235 to 326 are Extracellular-facing; sequence KCKMHKTCYY…WINDAMGNDW (92 aa). N-linked (GlcNAc...) asparagine glycosylation is present at N274. Residues 327-351 form a helical membrane-spanning segment; the sequence is PWIYFLTLILVGSFFILNLVLGALS. The Cytoplasmic portion of the chain corresponds to 352-447; sequence GEFTKEREES…RKCHVWVKSK (96 aa). Residues 374-391 are binding to the beta subunit; that stretch reads QQMDEDLEGYMEWITHAE. The II repeat unit spans residues 433–679; sequence NVVLRRKCHV…VFLAIAVDNL (247 aa). A helical membrane pass occupies residues 448–466; that stretch reads FFNWWVLLVVLLNTLVIAM. Residues 467–481 are Extracellular-facing; the sequence is EHHNQTEGLTSFQDT. An N-linked (GlcNAc...) asparagine glycan is attached at N470. Residues 482-501 form a helical membrane-spanning segment; sequence ANVILLACFTIEMVMKMYAF. Topologically, residues 502–509 are cytoplasmic; the sequence is GPRAYFMS. A helical transmembrane segment spans residues 510 to 528; the sequence is IFNRFDCFVVTIGILEIIL. Residues 529 to 538 are Extracellular-facing; it reads VVSNIMTPLG. The helical transmembrane segment at 539-557 threads the bilayer; sequence ISVMRCIRLLRLFKLTRYW. The Cytoplasmic segment spans residues 558–576; sequence TSLNNLVASLLNSVKSIAS. The helical transmembrane segment at 577 to 596 threads the bilayer; the sequence is LLLLLFLFIVIFALLGMQVF. Residues 597–651 lie on the Extracellular side of the membrane; it reads GGKFNFPDRVIQRSNFDNFPQALISVFQVLTGEEWDSIMYNGIMAHGGPQSPGIL. Residues 652-675 traverse the membrane as a helical segment; it reads VSIYFIILYVCGNFVLLNVFLAIA. Residues 676–815 lie on the Cytoplasmic side of the membrane; that stretch reads VDNLAEAESL…KLCHRIVNHT (140 aa). One copy of the III repeat lies at 802–1084; the sequence is HKFRKLCHRI…IFVGFVIVTF (283 aa). Residues 816 to 834 form a helical membrane-spanning segment; that stretch reads TFTNIILLFILLSSISLAA. Over 835-850 the chain is Extracellular; sequence EDPIDPRSFRNKVLAY. A helical transmembrane segment spans residues 851 to 870; the sequence is ADIVFTTVFTIEIVLKMTVY. The Cytoplasmic segment spans residues 871-882; the sequence is GAFLHTGSFCRN. A helical membrane pass occupies residues 883 to 901; it reads SFNILDLIVVGVSLLSMGM. The Extracellular portion of the chain corresponds to 902-908; sequence ESSTISV. The helical transmembrane segment at 909-927 threads the bilayer; sequence VKILRVLRVLRPLRAINRA. Over 928–946 the chain is Cytoplasmic; sequence KGLKHVVQCMFVAIKTIGN. A helical membrane pass occupies residues 947 to 966; that stretch reads IVLVTMLLDFMFACIGVQLF. Residues 967 to 1056 are Extracellular-facing; that stretch reads KGKLYYCTDP…TGPLYNNRVG (90 aa). The dihydropyridine binding stretch occupies residues 1004-1093; sequence RMWVNSDFNF…FQKQGEQEYK (90 aa). Residues 1057 to 1081 form a helical membrane-spanning segment; it reads ISIFFIIYIIIIAFFMMNIFVGFVI. The Cytoplasmic portion of the chain corresponds to 1082–1134; sequence VTFQKQGEQEYKDCELDKNQRQCVQYALKARPLKCYIPKNPHQYRVWYFVTSC. Residues 1121 to 1405 form an IV repeat; the sequence is NPHQYRVWYF…LFVAIIMDNV (285 aa). Residues 1135 to 1153 traverse the membrane as a helical segment; the sequence is YFEYLMFFLIMLNTLCLGI. Residues 1154–1168 are Extracellular-facing; that stretch reads QHCNQSDHITKLSDT. N1157 carries an N-linked (GlcNAc...) asparagine glycan. The helical transmembrane segment at 1169–1188 threads the bilayer; it reads LNLIFTVLFTGEMIVKLIAF. Over 1189–1196 the chain is Cytoplasmic; it reads KAKGYFGD. The chain crosses the membrane as a helical span at residues 1197-1215; that stretch reads PWNVFDFIIVVGSIVDVVL. Residues 1216–1252 lie on the Extracellular side of the membrane; the sequence is SEVDAALEARGGLWCLHGCAEVNPMQAIAEAENVRVS. Residues 1253 to 1271 traverse the membrane as a helical segment; sequence ITFFRLFRVLRLIKLLNRS. Over 1272-1290 the chain is Cytoplasmic; that stretch reads EGIRNLLWTFIKSFQALPH. Residues 1291–1310 form a helical membrane-spanning segment; it reads VGLLIVMLFFIYAVIGMQMF. The Extracellular portion of the chain corresponds to 1311 to 1377; sequence GKVALVDGTE…GEEYTCGSSI (67 aa). The dihydropyridine binding stretch occupies residues 1358 to 1424; sequence LCDAKSDYGP…LGPHHLDEFK (67 aa). A phenylalkylamine binding region spans residues 1370–1413; sequence EYTCGSSIAVFYFLSFYILCAFLIINLFVAIIMDNVDYLTRDWS. Residues 1378 to 1402 traverse the membrane as a helical segment; the sequence is AVFYFLSFYILCAFLIINLFVAIIM. The Cytoplasmic portion of the chain corresponds to 1403-1852; that stretch reads DNVDYLTRDW…TKPKENTSAV (450 aa). Residues 1418–1453 form the EF-hand domain; sequence HHLDEFKKIWAEYDPEATGRIKHLDVVTLLRRIQPP. Ca(2+) is bound by residues D1431, E1433, T1435, R1437, and D1442. The interval 1820-1852 is disordered; the sequence is NRQSGKVTKRKRRPIPVPPGTKSTKPKENTSAV.

It belongs to the calcium channel alpha-1 subunit (TC 1.A.1.11) family. As to quaternary structure, multisubunit complex consisting of alpha-1, alpha-2, beta and delta subunits in a 1:1:1:1 ratio. The channel activity is directed by the pore-forming and voltage-sensitive alpha-1 subunit. In many cases, this subunit is sufficient to generate voltage-sensitive calcium channel activity. The auxiliary subunits beta and alpha-2/delta linked by a disulfide bridge regulate the channel activity. An additional gamma subunit is present only in skeletal muscle L-type channel. Post-translationally, may be non-phosphorylated. In terms of tissue distribution, skeletal muscle.

It localises to the membrane. Its function is as follows. Voltage-sensitive calcium channels (VSCC) mediate the entry of calcium ions into excitable cells and are also involved in a variety of calcium-dependent processes, including muscle contraction, gene expression, cell motility, cell division and cell death. The isoform alpha-1S gives rise to L-type calcium currents. Long-lasting (L-type) calcium channels belong to the 'high-voltage activated' (HVA) group. They are blocked by dihydropyridines (DHP), phenylalkylamines, and by benzothiazepines. Calcium channels containing the alpha-1S subunit play an important role in excitation-contraction coupling in skeletal muscle. The chain is Dihydropyridine-sensitive L-type skeletal muscle calcium channel subunit alpha-1 from Cyprinus carpio (Common carp).